The following is a 410-amino-acid chain: Acyl-CoA-binding domain-containing protein 5-B (410 aa).

An ACB domain is found at A12–V101. Residues I23 to Y32, Y43 to K47, K69, and Y88 contribute to the an acyl-CoA site. Residues V119–E128 are compositionally biased toward acidic residues. Disordered regions lie at residues V119–Y165, S221–V242, and G254–D320. Positions T326–S355 form a coiled coil. At S382–L404 the chain is embedded in the membrane.

It is found in the membrane. Functionally, binds medium- and long-chain acyl-CoA esters. This is Acyl-CoA-binding domain-containing protein 5-B (acbd5b) from Danio rerio (Zebrafish).